A 267-amino-acid polypeptide reads, in one-letter code: Phosphonoacetaldehyde hydrolase (267 aa).

Residue Asp10 is the Nucleophile of the active site. Positions 10 and 12 each coordinate Mg(2+). Lys51 acts as the Schiff-base intermediate with substrate in catalysis. Residue Asp184 participates in Mg(2+) binding.

Belongs to the HAD-like hydrolase superfamily. PhnX family. Homodimer. The cofactor is Mg(2+).

It carries out the reaction phosphonoacetaldehyde + H2O = acetaldehyde + phosphate + H(+). Involved in phosphonate degradation. This chain is Phosphonoacetaldehyde hydrolase, found in Paraburkholderia xenovorans (strain LB400).